The following is a 380-amino-acid chain: Succinate--CoA ligase [ADP-forming] subunit beta (380 aa).

The region spanning 9–236 (KGVFADAGIP…EAAGDELEAK (228 aa)) is the ATP-grasp domain. ATP-binding positions include lysine 45, 52 to 54 (GRG), glutamate 91, valine 94, and glutamate 99. The Mg(2+) site is built by asparagine 191 and aspartate 205. Substrate is bound by residues asparagine 256 and 313 to 315 (GIT).

Belongs to the succinate/malate CoA ligase beta subunit family. In terms of assembly, heterotetramer of two alpha and two beta subunits. Mg(2+) is required as a cofactor.

The enzyme catalyses succinate + ATP + CoA = succinyl-CoA + ADP + phosphate. It carries out the reaction GTP + succinate + CoA = succinyl-CoA + GDP + phosphate. It participates in carbohydrate metabolism; tricarboxylic acid cycle; succinate from succinyl-CoA (ligase route): step 1/1. Succinyl-CoA synthetase functions in the citric acid cycle (TCA), coupling the hydrolysis of succinyl-CoA to the synthesis of either ATP or GTP and thus represents the only step of substrate-level phosphorylation in the TCA. The beta subunit provides nucleotide specificity of the enzyme and binds the substrate succinate, while the binding sites for coenzyme A and phosphate are found in the alpha subunit. In Natronomonas pharaonis (strain ATCC 35678 / DSM 2160 / CIP 103997 / JCM 8858 / NBRC 14720 / NCIMB 2260 / Gabara) (Halobacterium pharaonis), this protein is Succinate--CoA ligase [ADP-forming] subunit beta.